The primary structure comprises 464 residues: Protein FAM90A13 (464 aa).

3 disordered regions span residues 1 to 42 (MMAR…DPRL), 69 to 389 (VPAT…HDGA), and 411 to 437 (APSF…SEAP). 2 stretches are compositionally biased toward basic and acidic residues: residues 74-89 (GKKE…KPRG) and 97-114 (NKDK…DPQR). A compositionally biased stretch (low complexity) spans 180-197 (LASLSPLRKASLSSSSSL).

The protein belongs to the FAM90 family.

The polypeptide is Protein FAM90A13 (Homo sapiens (Human)).